The primary structure comprises 344 residues: Anthranilate phosphoribosyltransferase (344 aa).

5-phospho-alpha-D-ribose 1-diphosphate is bound by residues Gly85, 88 to 89, Thr93, 95 to 98, 113 to 121, and Ser125; these read GD, NIST, and KHGGRSVSS. Position 85 (Gly85) interacts with anthranilate. Ser97 is a Mg(2+) binding site. Arg171 contacts anthranilate. Positions 230 and 231 each coordinate Mg(2+).

The protein belongs to the anthranilate phosphoribosyltransferase family. As to quaternary structure, homodimer. Mg(2+) serves as cofactor.

It carries out the reaction N-(5-phospho-beta-D-ribosyl)anthranilate + diphosphate = 5-phospho-alpha-D-ribose 1-diphosphate + anthranilate. It participates in amino-acid biosynthesis; L-tryptophan biosynthesis; L-tryptophan from chorismate: step 2/5. Its function is as follows. Catalyzes the transfer of the phosphoribosyl group of 5-phosphorylribose-1-pyrophosphate (PRPP) to anthranilate to yield N-(5'-phosphoribosyl)-anthranilate (PRA). This chain is Anthranilate phosphoribosyltransferase, found in Acidovorax ebreus (strain TPSY) (Diaphorobacter sp. (strain TPSY)).